The sequence spans 244 residues: Extracellular superoxide dismutase [Cu-Zn] (244 aa).

An N-terminal signal peptide occupies residues 1–15 (MVAFLFCNLLLVACG). 2 disulfide bridges follow: Cys-70-Cys-215 and Cys-132-Cys-214. An N-linked (GlcNAc...) asparagine glycan is attached at Asn-114. 3 residues coordinate Cu cation: His-121, His-123, and His-138. 4 residues coordinate Zn(2+): His-138, His-146, His-149, and Asp-152. Residue His-188 coordinates Cu cation. The segment at 224-244 (AWESQTKERKKRRRESECKTT) is disordered.

The protein belongs to the Cu-Zn superoxide dismutase family. In terms of assembly, homodimer. Interacts with ATP7A; this interaction is copper-dependent and is required for SOD3 activity. It depends on Cu cation as a cofactor. Zn(2+) serves as cofactor.

The protein resides in the secreted. It localises to the extracellular space. Its subcellular location is the golgi apparatus. It is found in the trans-Golgi network. It carries out the reaction 2 superoxide + 2 H(+) = H2O2 + O2. Its function is as follows. Protect the extracellular space from toxic effect of reactive oxygen intermediates by converting superoxide radicals into hydrogen peroxide and oxygen. The sequence is that of Extracellular superoxide dismutase [Cu-Zn] (Sod3) from Rattus norvegicus (Rat).